The chain runs to 104 residues: N(4)-acetylcytidine amidohydrolase (104 aa).

Residues methionine 7–isoleucine 93 form the ASCH domain. The active-site Proton acceptor is lysine 22. Threonine 25 (nucleophile) is an active-site residue. Glutamate 75 serves as the catalytic Proton donor.

This sequence belongs to the N(4)-acetylcytidine amidohydrolase family.

It carries out the reaction N(4)-acetylcytidine + H2O = cytidine + acetate + H(+). The enzyme catalyses N(4)-acetyl-2'-deoxycytidine + H2O = 2'-deoxycytidine + acetate + H(+). The catalysed reaction is N(4)-acetylcytosine + H2O = cytosine + acetate + H(+). Catalyzes the hydrolysis of N(4)-acetylcytidine (ac4C). The protein is N(4)-acetylcytidine amidohydrolase of Vibrio vulnificus (strain CMCP6).